The primary structure comprises 223 residues: Ribose-5-phosphate isomerase A (223 aa).

Substrate contacts are provided by residues 28–31, 81–84, and 94–97; these read TGST, DGAD, and KGGG. Glutamate 103 (proton acceptor) is an active-site residue. Position 121 (lysine 121) interacts with substrate.

This sequence belongs to the ribose 5-phosphate isomerase family. As to quaternary structure, homodimer.

It carries out the reaction aldehydo-D-ribose 5-phosphate = D-ribulose 5-phosphate. It participates in carbohydrate degradation; pentose phosphate pathway; D-ribose 5-phosphate from D-ribulose 5-phosphate (non-oxidative stage): step 1/1. Its function is as follows. Catalyzes the reversible conversion of ribose-5-phosphate to ribulose 5-phosphate. This Herminiimonas arsenicoxydans protein is Ribose-5-phosphate isomerase A.